We begin with the raw amino-acid sequence, 226 residues long: Ornithine decarboxylase antizyme (226 aa).

This sequence belongs to the ODC antizyme family. As to quaternary structure, interacts with ODC and thereby sterically blocks ODC homodimerization.

Functionally, ornithine decarboxylase (ODC) antizyme protein that negatively regulates ODC activity and intracellular polyamine biosynthesis in response to increased intracellular polyamine levels. Binds to ODC monomers, inhibiting the assembly of the functional ODC homodimer, and targets the monomers for ubiquitin-independent proteolytic destruction by the 26S proteasome. This is Ornithine decarboxylase antizyme (spa1) from Schizosaccharomyces japonicus (Fission yeast).